Consider the following 230-residue polypeptide: Orotidine 5'-phosphate decarboxylase (230 aa).

Substrate-binding positions include D10, K32, 59-68 (DLKYHDIPNT), T119, R180, Q189, G209, and R210. The Proton donor role is filled by K61.

Belongs to the OMP decarboxylase family. Type 1 subfamily. Homodimer.

It carries out the reaction orotidine 5'-phosphate + H(+) = UMP + CO2. The protein operates within pyrimidine metabolism; UMP biosynthesis via de novo pathway; UMP from orotate: step 2/2. Its function is as follows. Catalyzes the decarboxylation of orotidine 5'-monophosphate (OMP) to uridine 5'-monophosphate (UMP). The sequence is that of Orotidine 5'-phosphate decarboxylase from Haemophilus ducreyi (strain 35000HP / ATCC 700724).